The chain runs to 473 residues: Ribulose bisphosphate carboxylase large chain (473 aa).

Residues asparagine 116 and threonine 166 each contribute to the substrate site. Residue lysine 168 is the Proton acceptor of the active site. Residue lysine 170 coordinates substrate. Mg(2+)-binding residues include lysine 194, aspartate 196, and glutamate 197. Lysine 194 is modified (N6-carboxylysine). Catalysis depends on histidine 287, which acts as the Proton acceptor. Positions 288, 320, and 372 each coordinate substrate.

It belongs to the RuBisCO large chain family. Type I subfamily. As to quaternary structure, heterohexadecamer of 8 large chains and 8 small chains. Requires Mg(2+) as cofactor.

The catalysed reaction is 2 (2R)-3-phosphoglycerate + 2 H(+) = D-ribulose 1,5-bisphosphate + CO2 + H2O. It carries out the reaction D-ribulose 1,5-bisphosphate + O2 = 2-phosphoglycolate + (2R)-3-phosphoglycerate + 2 H(+). Functionally, ruBisCO catalyzes two reactions: the carboxylation of D-ribulose 1,5-bisphosphate, the primary event in carbon dioxide fixation, as well as the oxidative fragmentation of the pentose substrate. Both reactions occur simultaneously and in competition at the same active site. This is Ribulose bisphosphate carboxylase large chain from Nitrosomonas eutropha (strain DSM 101675 / C91 / Nm57).